Consider the following 122-residue polypeptide: MAAPVDLELKKAFTELQAKVIDTQQKVKLADIQIEQLNRTKKHAHLTDTEIMTLVDETNMYEGVGRMFILQSKEAIHSQLLEKQKIAEEKIKELEQKKSYLERSVKEAEDNIREMLMARRAQ.

N-acetylalanine is present on Ala-2.

It belongs to the prefoldin subunit beta family. As to quaternary structure, heterohexamer of two PFD-alpha type and four PFD-beta type subunits.

Its function is as follows. Binds specifically to cytosolic chaperonin (c-CPN) and transfers target proteins to it. Binds to nascent polypeptide chain and promotes folding in an environment in which there are many competing pathways for nonnative proteins. In Homo sapiens (Human), this protein is Prefoldin subunit 1 (PFDN1).